Consider the following 179-residue polypeptide: Large ribosomal subunit protein uL5 (179 aa).

Belongs to the universal ribosomal protein uL5 family. In terms of assembly, part of the 50S ribosomal subunit; part of the 5S rRNA/L5/L18/L25 subcomplex. Contacts the 5S rRNA and the P site tRNA. Forms a bridge to the 30S subunit in the 70S ribosome.

This is one of the proteins that bind and probably mediate the attachment of the 5S RNA into the large ribosomal subunit, where it forms part of the central protuberance. In the 70S ribosome it contacts protein S13 of the 30S subunit (bridge B1b), connecting the 2 subunits; this bridge is implicated in subunit movement. Contacts the P site tRNA; the 5S rRNA and some of its associated proteins might help stabilize positioning of ribosome-bound tRNAs. The protein is Large ribosomal subunit protein uL5 of Staphylococcus carnosus (strain TM300).